The following is a 106-amino-acid chain: MTLYYIGILVVIIGLFSIFSGIIGFFRFPDFYTKLHAASVIESFAVPICLIGFACIELDMLNSIKLILAALLILLLNPVATHALGKASLLMKIRTYNTVLLKKIRK.

It belongs to the UPF0091 family.

This Rickettsia prowazekii (strain Madrid E) protein is UPF0091 protein RP266.